We begin with the raw amino-acid sequence, 61 residues long: Probable tautomerase lin2709 (61 aa).

Proline 2 functions as the Proton acceptor; via imino nitrogen in the catalytic mechanism.

The protein belongs to the 4-oxalocrotonate tautomerase family.

This Listeria innocua serovar 6a (strain ATCC BAA-680 / CLIP 11262) protein is Probable tautomerase lin2709.